The chain runs to 481 residues: Trigger factor (481 aa).

In terms of domain architecture, PPIase FKBP-type spans glycine 161–proline 298. Residues aspartate 173–arginine 245 are disordered. The span at glutamate 182–glutamate 235 shows a compositional bias: acidic residues.

The protein belongs to the FKBP-type PPIase family. Tig subfamily.

It is found in the cytoplasm. It catalyses the reaction [protein]-peptidylproline (omega=180) = [protein]-peptidylproline (omega=0). In terms of biological role, involved in protein export. Acts as a chaperone by maintaining the newly synthesized protein in an open conformation. Functions as a peptidyl-prolyl cis-trans isomerase. This is Trigger factor from Herpetosiphon aurantiacus (strain ATCC 23779 / DSM 785 / 114-95).